We begin with the raw amino-acid sequence, 93 residues long: YcgL domain-containing protein VV1058 (93 aa).

The 84-residue stretch at 1 to 84 (MLCSIYKSSK…PPENLLQQHK (84 aa)) folds into the YcgL domain. The interval 74-93 (PPPENLLQQHKERKAQQKND) is disordered.

In Vibrio vulnificus (strain YJ016), this protein is YcgL domain-containing protein VV1058.